The chain runs to 480 residues: Chromosomal replication initiator protein DnaA (480 aa).

The interval methionine 1–arginine 71 is domain I, interacts with DnaA modulators. The interval arginine 71–serine 142 is domain II. Residues arginine 143 to alanine 359 are domain III, AAA+ region. Glycine 187, glycine 189, lysine 190, and threonine 191 together coordinate ATP. The interval arginine 360–glycine 480 is domain IV, binds dsDNA.

Belongs to the DnaA family. In terms of assembly, oligomerizes as a right-handed, spiral filament on DNA at oriC.

It localises to the cytoplasm. Functionally, plays an essential role in the initiation and regulation of chromosomal replication. ATP-DnaA binds to the origin of replication (oriC) to initiate formation of the DNA replication initiation complex once per cell cycle. Binds the DnaA box (a 9 base pair repeat at the origin) and separates the double-stranded (ds)DNA. Forms a right-handed helical filament on oriC DNA; dsDNA binds to the exterior of the filament while single-stranded (ss)DNA is stabiized in the filament's interior. The ATP-DnaA-oriC complex binds and stabilizes one strand of the AT-rich DNA unwinding element (DUE), permitting loading of DNA polymerase. After initiation quickly degrades to an ADP-DnaA complex that is not apt for DNA replication. Binds acidic phospholipids. The sequence is that of Chromosomal replication initiator protein DnaA from Bordetella bronchiseptica (strain ATCC BAA-588 / NCTC 13252 / RB50) (Alcaligenes bronchisepticus).